Consider the following 517-residue polypeptide: Cytochrome P450 monooxygenase ausI (517 aa).

The chain crosses the membrane as a helical span at residues Leu-8 to Leu-28. Position 457 (Cys-457) interacts with heme.

Belongs to the cytochrome P450 family. Heme is required as a cofactor.

It is found in the membrane. The protein operates within secondary metabolite biosynthesis; terpenoid biosynthesis. Functionally, cytochrome P450 monooxygenase; part of the gene cluster that mediates the biosynthesis of calidodehydroaustin, a fungal meroterpenoid. The first step of the pathway is the synthesis of 3,5-dimethylorsellinic acid by the polyketide synthase ausA. 3,5-dimethylorsellinic acid is then prenylated by the polyprenyl transferase ausN. Further epoxidation by the FAD-dependent monooxygenase ausM and cyclization by the probable terpene cyclase ausL lead to the formation of protoaustinoid A. Protoaustinoid A is then oxidized to spiro-lactone preaustinoid A3 by the combined action of the FAD-binding monooxygenases ausB and ausC, and the dioxygenase ausE. Acid-catalyzed keto-rearrangement and ring contraction of the tetraketide portion of preaustinoid A3 by ausJ lead to the formation of preaustinoid A4. The aldo-keto reductase ausK, with the help of ausH, is involved in the next step by transforming preaustinoid A4 into isoaustinone which is in turn hydroxylated by the P450 monooxygenase ausI to form austinolide. The cytochrome P450 monooxygenase ausG modifies austinolide to austinol. Austinol is further acetylated to austin by the O-acetyltransferase ausP, which spontaneously changes to dehydroaustin. The cytochrome P450 monooxygenase ausR then converts dehydroaustin is into 7-dehydrodehydroaustin. The hydroxylation catalyzed by ausR permits the O-acetyltransferase ausQ to add an additional acetyl group to the molecule, leading to the formation of acetoxydehydroaustin. The short chain dehydrogenase ausT catalyzes the reduction of the double bond present between carbon atoms 1 and 2 to convert 7-dehydrodehydroaustin into 1,2-dihydro-7-hydroxydehydroaustin. AusQ catalyzes not only an acetylation reaction but also the addition of the PKS ausV diketide product to 1,2-dihydro-7-hydroxydehydroaustin, forming precalidodehydroaustin. Finally, the iron/alpha-ketoglutarate-dependent dioxygenase converts precalidodehydroaustin into calidodehydroaustin. The polypeptide is Cytochrome P450 monooxygenase ausI (Aspergillus calidoustus).